The primary structure comprises 247 residues: Carboxy-S-adenosyl-L-methionine synthase (247 aa).

Residues tyrosine 40, 65 to 67 (GAS), 90 to 91 (DN), 122 to 123 (DI), asparagine 137, and arginine 204 each bind S-adenosyl-L-methionine.

This sequence belongs to the class I-like SAM-binding methyltransferase superfamily. Cx-SAM synthase family. Homodimer.

It catalyses the reaction prephenate + S-adenosyl-L-methionine = carboxy-S-adenosyl-L-methionine + 3-phenylpyruvate + H2O. In terms of biological role, catalyzes the conversion of S-adenosyl-L-methionine (SAM) to carboxy-S-adenosyl-L-methionine (Cx-SAM). This chain is Carboxy-S-adenosyl-L-methionine synthase, found in Pseudomonas fluorescens (strain Pf0-1).